The sequence spans 54 residues: Potassium channel toxin alpha-KTx 14.3 (54 aa).

The signal sequence occupies residues 1–23 (MKIFFAILLILAVCSMAIWTVNG).

This sequence belongs to the short scorpion toxin superfamily. Potassium channel inhibitor family. Alpha-KTx 14 subfamily. In terms of processing, contains 3 disulfide bridges. As to expression, expressed by the venom gland.

The protein localises to the secreted. Potential blocker of potassium channels. The protein is Potassium channel toxin alpha-KTx 14.3 of Olivierus martensii (Manchurian scorpion).